The following is a 75-amino-acid chain: Small ribosomal subunit protein bS18c (75 aa).

This sequence belongs to the bacterial ribosomal protein bS18 family. As to quaternary structure, part of the 30S ribosomal subunit.

The protein localises to the plastid. The protein resides in the chloroplast. This chain is Small ribosomal subunit protein bS18c (rps18), found in Anthoceros angustus (Hornwort).